The chain runs to 156 residues: Small ribosomal subunit protein uS7 (156 aa).

The protein belongs to the universal ribosomal protein uS7 family. Part of the 30S ribosomal subunit. Contacts proteins S9 and S11.

Functionally, one of the primary rRNA binding proteins, it binds directly to 16S rRNA where it nucleates assembly of the head domain of the 30S subunit. Is located at the subunit interface close to the decoding center, probably blocks exit of the E-site tRNA. The chain is Small ribosomal subunit protein uS7 from Lactobacillus johnsonii (strain CNCM I-12250 / La1 / NCC 533).